A 314-amino-acid chain; its full sequence is Acetaldehyde dehydrogenase 2 (314 aa).

15–18 (SGNI) lines the NAD(+) pocket. The active-site Acyl-thioester intermediate is the C133. NAD(+)-binding positions include 164–172 (SAGPGTRAN) and N291.

It belongs to the acetaldehyde dehydrogenase family.

It catalyses the reaction acetaldehyde + NAD(+) + CoA = acetyl-CoA + NADH + H(+). This chain is Acetaldehyde dehydrogenase 2, found in Pseudomonas putida (strain ATCC 700007 / DSM 6899 / JCM 31910 / BCRC 17059 / LMG 24140 / F1).